The following is a 411-amino-acid chain: Ubiquitin-binding protein CUE5 (411 aa).

A compositionally biased stretch (basic and acidic residues) spans 1–12 (MEEKEGIKDSSL). Disordered regions lie at residues 1–102 (MEEK…NPIL) and 142–411 (ESGK…DDEM). Residue lysine 15 forms a Glycyl lysine isopeptide (Lys-Gly) (interchain with G-Cter in ubiquitin) linkage. Residues serine 21 and serine 36 each carry the phosphoserine modification. The span at 25–58 (DISKTTDVDLNSDGKKDNDTSAKDGTPKVEEKVN) shows a compositional bias: basic and acidic residues. Lysine 59 is covalently cross-linked (Glycyl lysine isopeptide (Lys-Gly) (interchain with G-Cter in ubiquitin)). Threonine 70 carries the phosphothreonine modification. Lysine 76 is covalently cross-linked (Glycyl lysine isopeptide (Lys-Gly) (interchain with G-Cter in ubiquitin)). A Phosphoserine modification is found at serine 91. Residues 97–140 (KENPILQELKDAFPNLEEKYIKAVIIASQGVLSPAFNALLFLSD) form the CUE domain. Residue lysine 156 forms a Glycyl lysine isopeptide (Lys-Gly) (interchain with G-Cter in ubiquitin) linkage. Position 167 is a phosphothreonine (threonine 167). Residues 209–219 (NPNEREQHHED) are compositionally biased toward basic and acidic residues. Serine 220 is modified (phosphoserine). Positions 230–242 (VEKDLPELTDRAG) are enriched in basic and acidic residues. The span at 245–256 (LQDTANKVSNWI) shows a compositional bias: polar residues. Residues serine 309 and serine 318 each carry the phosphoserine modification. A Phosphothreonine modification is found at threonine 346. At serine 348 the chain carries Phosphoserine. Threonine 352 carries the phosphothreonine modification. A Glycyl lysine isopeptide (Lys-Gly) (interchain with G-Cter in ubiquitin) cross-link involves residue lysine 354. Residues threonine 364 and threonine 367 each carry the phosphothreonine modification. The AIM signature appears at 373-376 (WQPL). Lysine 396 is covalently cross-linked (Glycyl lysine isopeptide (Lys-Gly) (interchain with G-Cter in ubiquitin)). A compositionally biased stretch (acidic residues) spans 399 to 411 (DEDEFLINSDDEM). Serine 407 bears the Phosphoserine mark.

Interacts with ATG8 (via AIM motif), CLB2, and ubiquitin (via CUE domain).

It is found in the cytoplasm. In terms of biological role, connects the ubiquitin pathway to autophagy by functioning as a ubiquitin-ATG8 adapter and thus mediating autophagic clearance of ubiquitin conjugates under starvation conditions. The CUE5-dependent selective autophagy pathway plays an important role in clearance of cytotoxic protein aggregates. Not required for cytoplasmic to vacuole pathway (cvt), mitophagy, pexophagy, or ribophagy. This is Ubiquitin-binding protein CUE5 from Saccharomyces cerevisiae (strain ATCC 204508 / S288c) (Baker's yeast).